The primary structure comprises 350 residues: (RS)-norcoclaurine 6-O-methyltransferase (350 aa).

Met-166 provides a ligand contact to S-adenosyl-L-methionine. Residue Asp-169 participates in substrate binding. S-adenosyl-L-methionine contacts are provided by residues Thr-170, Gly-195, Asp-218, 238 to 239 (DM), and Lys-252. Residues 253–257 (CILHD) and Asp-306 contribute to the substrate site. His-256 acts as the Proton acceptor in catalysis.

Belongs to the class I-like SAM-binding methyltransferase superfamily. Cation-independent O-methyltransferase family. COMT subfamily. In terms of assembly, homodimer. In terms of tissue distribution, expressed in leaf primordia of rhizomes and root endodermis.

The enzyme catalyses (S)-norcoclaurine + S-adenosyl-L-methionine = (S)-coclaurine + S-adenosyl-L-homocysteine + H(+). The catalysed reaction is norcoclaurine + S-adenosyl-L-methionine = coclaurine + S-adenosyl-L-homocysteine + H(+). With respect to regulation, inhibited by sanguinarine. Functionally, involved in the biosynthesis of coclaurine, a precursor of benzylisoquinoline alkaloids. Catalyzes the transfer of the S-methyl group of S-adenosyl-L-methionine (AdoMet) to the 6-hydroxyl group of norcoclaurine to form coclaurine. The polypeptide is (RS)-norcoclaurine 6-O-methyltransferase (Thalictrum flavum subsp. glaucum (Yellow meadow rue)).